We begin with the raw amino-acid sequence, 299 residues long: Taste receptor type 2 member 4 (299 aa).

Residues 1 to 9 (MLWLFYSSA) lie on the Extracellular side of the membrane. The helical transmembrane segment at 10 to 30 (IIASVILDFVGIIMSLFITVV) threads the bilayer. Topologically, residues 31–46 (NYKTWVKSHRISSSER) are cytoplasmic. The chain crosses the membrane as a helical span at residues 47–67 (ILFSLGITRFFMLALFLVNTI). Topologically, residues 68–81 (YFVSSNKERSVYLS) are extracellular. A helical membrane pass occupies residues 82–102 (AFFVLCFMFLDSSSLWFVTLL). The Cytoplasmic portion of the chain corresponds to 103–131 (NSLYCVKITNFQHSVFLLLKRNISPKIPR). The helical transmembrane segment at 132-152 (LLPACVLISAFTTCLYITLSQ) threads the bilayer. The Extracellular portion of the chain corresponds to 153–172 (ASPFPELVTKRNNTSFNISE). 3 N-linked (GlcNAc...) asparagine glycosylation sites follow: N164, N165, and N169. A helical transmembrane segment spans residues 173-193 (GILSLVVSFVLSSSLQFIINV). Topologically, residues 194 to 230 (TSASLLIYSLRRHIRKMQKNATGFWNPQTEAHVGAMK) are cytoplasmic. A helical transmembrane segment spans residues 231–251 (LMIYFLILYIPYSVATLVQYL). The Extracellular segment spans residues 252-262 (PFYAGMDMGTK). The chain crosses the membrane as a helical span at residues 263–283 (SICLIFATLYSPGHSVLIIIT). Topologically, residues 284-299 (HPKLKTTAKKILCFKK) are cytoplasmic.

It belongs to the G-protein coupled receptor T2R family.

It is found in the membrane. The protein resides in the cell projection. The protein localises to the cilium membrane. In terms of biological role, gustducin-coupled receptor implicated in the perception of bitter compounds in the oral cavity and the gastrointestinal tract. Signals through PLCB2 and the calcium-regulated cation channel TRPM5. In airway epithelial cells, binding of denatonium increases the intracellular calcium ion concentration and stimulates ciliary beat frequency. The polypeptide is Taste receptor type 2 member 4 (TAS2R4) (Papio hamadryas (Hamadryas baboon)).